Reading from the N-terminus, the 194-residue chain is Cilia- and flagella-associated protein 107 (194 aa).

Mn stretches follow at residues 45-60 (TPQS…FPDH) and 95-107 (ISTY…RHGY).

In terms of assembly, microtubule inner protein component of sperm flagellar doublet microtubules. In terms of tissue distribution, expressed in airway epithelial cells.

The protein resides in the cytoplasm. Its subcellular location is the cytoskeleton. The protein localises to the cilium axoneme. It is found in the flagellum axoneme. Functionally, microtubule inner protein (MIP) part of the dynein-decorated doublet microtubules (DMTs) in cilia axoneme, which is required for motile cilia beating. The chain is Cilia- and flagella-associated protein 107 from Homo sapiens (Human).